The primary structure comprises 201 residues: Regulator of G-protein signaling rgs-1 (201 aa).

Residues 37–156 form the RGS domain; it reads SWQQSFDTLM…FLTSIFYRET (120 aa). The disordered stretch occupies residues 168-201; the sequence is GGDEEKEREQRAERARLNVPATAAEGSSKDISMV. The segment covering 170-183 has biased composition (basic and acidic residues); sequence DEEKEREQRAERAR.

Expressed in most or all neurons.

Functionally, inhibits G protein signaling in nervous system, interacting preferentially with the G(O) subfamily member goa-1. In vitro, protein acts as a GTPase activator of goa-1. Rgs-1 and rgs-2 redundantly adjust signaling when worms are fed to allow rapid induction of egg-laying behavior. This Caenorhabditis elegans protein is Regulator of G-protein signaling rgs-1 (rgs-1).